Here is a 406-residue protein sequence, read N- to C-terminus: Kelch domain-containing protein 2 (406 aa).

Kelch repeat units follow at residues 31–85 (ERSG…NTEG), 92–136 (SGSC…ERID), 148–207 (LGVW…TWSQ), 221–259 (HACA…NELI), 271–311 (HSLT…IQFN), and 322–359 (HTAC…IFSV).

As to quaternary structure, component of a CRL2(KLHDC2) E3 ubiquitin-protein ligase complex, also named ECS(KLHDC2) complex, composed of CUL2, Elongin BC (ELOB and ELOC), RBX1 and substrate-specific adapter KLHDC2. May form oligomers as a KLHDC2-ELOB-ELOC complex; this interaction is autoinhibitory for the E3 ligase complex as the substrate-binding site of KLHDC2 is blocked in the oligomer. Interacts with CREB3; interaction is direct and specific as it does not interact with CREB1, ATF4, ATF6, JUN, FOS, CEBPA or herpes simplex virus transactivator VP16. Autoubiquitinated by the CRL2(KLHDC2) E3 ligase complex. In terms of tissue distribution, widely expressed, with high levels in skeletal muscle, heart, pancreas and liver. Undetectable in peripheral blood leukocytes.

The protein localises to the nucleus. Its pathway is protein modification; protein ubiquitination. Substrate-recognition component of a Cul2-RING (CRL2) E3 ubiquitin-protein ligase complex of the DesCEND (destruction via C-end degrons) pathway, which recognizes a C-degron located at the extreme C terminus of target proteins, leading to their ubiquitination and degradation. The C-degron recognized by the DesCEND pathway is usually a motif of less than ten residues and can be present in full-length proteins, truncated proteins or proteolytically cleaved forms. The CRL2(KLHDC2) complex specifically recognizes proteins with a diglycine (Gly-Gly) at the C-terminus, leading to their ubiquitination and degradation. The CRL2(KLHDC2) complex mediates ubiquitination and degradation of truncated SELENOK and SELENOS selenoproteins produced by failed UGA/Sec decoding, which end with a diglycine. The CRL2(KLHDC2) complex also recognizes proteolytically cleaved proteins ending with Gly-Gly, such as the N-terminal fragment of USP1, leading to their degradation. May also act as an indirect repressor of CREB3-mediated transcription by interfering with CREB3-DNA-binding. The chain is Kelch domain-containing protein 2 from Homo sapiens (Human).